Consider the following 390-residue polypeptide: Chorismate synthase (390 aa).

Arg39 and Arg45 together coordinate NADP(+). FMN-binding positions include 132–134 (RSS), 253–254 (NA), Gly298, 313–317 (KPIPT), and Arg339.

The protein belongs to the chorismate synthase family. As to quaternary structure, homotetramer. It depends on FMNH2 as a cofactor.

The catalysed reaction is 5-O-(1-carboxyvinyl)-3-phosphoshikimate = chorismate + phosphate. The protein operates within metabolic intermediate biosynthesis; chorismate biosynthesis; chorismate from D-erythrose 4-phosphate and phosphoenolpyruvate: step 7/7. Its function is as follows. Catalyzes the anti-1,4-elimination of the C-3 phosphate and the C-6 proR hydrogen from 5-enolpyruvylshikimate-3-phosphate (EPSP) to yield chorismate, which is the branch point compound that serves as the starting substrate for the three terminal pathways of aromatic amino acid biosynthesis. This reaction introduces a second double bond into the aromatic ring system. The sequence is that of Chorismate synthase from Bacillus licheniformis (strain ATCC 14580 / DSM 13 / JCM 2505 / CCUG 7422 / NBRC 12200 / NCIMB 9375 / NCTC 10341 / NRRL NRS-1264 / Gibson 46).